The sequence spans 73 residues: Alternative prion protein (73 aa).

Residues 32–52 form a helical membrane-spanning segment; the sequence is WWWLGAASWWWLGAAPWWWLG.

Detected in brain homogenate, primary neurons, and peripheral blood mononuclear cells (at protein level).

Its subcellular location is the mitochondrion outer membrane. The sequence is that of Alternative prion protein (PRNP) from Homo sapiens (Human).